Consider the following 179-residue polypeptide: Ribosome maturation factor RimM (179 aa).

The 74-residue stretch at 103–176 folds into the PRC barrel domain; sequence EPDTYYDHQL…IVEIDPPKGL (74 aa).

The protein belongs to the RimM family. Binds ribosomal protein uS19.

The protein resides in the cytoplasm. An accessory protein needed during the final step in the assembly of 30S ribosomal subunit, possibly for assembly of the head region. Essential for efficient processing of 16S rRNA. May be needed both before and after RbfA during the maturation of 16S rRNA. It has affinity for free ribosomal 30S subunits but not for 70S ribosomes. The chain is Ribosome maturation factor RimM from Mycobacterium leprae (strain Br4923).